Reading from the N-terminus, the 142-residue chain is Neuritin (142 aa).

An N-terminal signal peptide occupies residues 1–27 (MGLTLSGRYISLFLAVQIAYLLQAVRA). A lipid anchor (GPI-anchor amidated alanine) is attached at A112. Residues 113–142 (GGNGAIRSSVPFGVTLLITALSALVTWMQF) constitute a propeptide, removed in mature form.

Belongs to the neuritin family.

Its subcellular location is the cell membrane. It localises to the synapse. In terms of biological role, modulates postsynaptic dendritic arbor elaboration and synaptic maturation. The protein is Neuritin (nrn1) of Danio rerio (Zebrafish).